A 101-amino-acid polypeptide reads, in one-letter code: MEKSKRLFLKSKRSFRRRLPPIQSGDRIDYRNMSLISRFISEQGKILSRRVNRLTLKQQRLITIAIKQARILSLLPFLNNEKQFERSESTAGATGLRTINK.

This sequence belongs to the bacterial ribosomal protein bS18 family. As to quaternary structure, part of the 30S ribosomal subunit.

Its subcellular location is the plastid. It localises to the chloroplast. The polypeptide is Small ribosomal subunit protein bS18c (Eucalyptus globulus subsp. globulus (Tasmanian blue gum)).